The primary structure comprises 948 residues: P cell-type agglutination protein map4 (948 aa).

The N-terminal stretch at 1–23 (MNSYAILLSLFFSFERLLTLANA) is a signal peptide. N-linked (GlcNAc...) asparagine glycosylation is found at Asn-31, Asn-32, and Asn-57. 2 disordered regions span residues 136–174 (IPRGDSATSTSIAPTYSASDSSATTITSSSPSTSIIGTG) and 253–333 (FYET…PTTY). Low complexity predominate over residues 149–174 (PTYSASDSSATTITSSSPSTSIIGTG). Residues 253-264 (FYETKSSTSSVP) are compositionally biased toward polar residues. Positions 265 to 332 (TQTIDSSSFT…PSLSSALPTT (68 aa)) are enriched in low complexity. Residue Asn-383 is glycosylated (N-linked (GlcNAc...) asparagine). The segment at 408–432 (LTSSTKKIPSTTLPTSSKMITTTTP) is disordered. Asn-436, Asn-469, Asn-491, Asn-522, Asn-553, Asn-568, and Asn-598 each carry an N-linked (GlcNAc...) asparagine glycan. Tandem repeats lie at residues 617-652 (SYVTETTTSGSVGFTTTIATPVGSTAGTVVVDIPTP), 653-688 (SWVTETVTSGSVGFTTTIATPVGSTAGTVLVDIPTP), 689-724 (SWVTETVTSGSVEFTTTIATPVGTTAGTVVVDIPTP), 725-760 (SWVTETVTSGSVGFTTTIATPIGTTAGTVLVDIPTP), and 761-796 (SWVTETVTSGSVGFTTTIATPVGTTAGTVLIDVPTP). The segment at 617 to 796 (SYVTETTTSG…GTVLIDVPTP (180 aa)) is 5 X 36 AA approximate tandem repeats. The region spanning 796–948 (PTASSSPFPS…ANVVLRALEY (153 aa)) is the DIPSY domain. N-linked (GlcNAc...) asparagine glycosylation is present at Asn-921.

It belongs to the mam3/map4 family.

The protein resides in the cell surface. Functionally, p cell-type specific protein which involved in agglutination during conjugation. This chain is P cell-type agglutination protein map4, found in Schizosaccharomyces pombe (strain 972 / ATCC 24843) (Fission yeast).